We begin with the raw amino-acid sequence, 207 residues long: Large ribosomal subunit protein uL4 (207 aa).

A disordered region spans residues Phe56–Ser77. Residues Lys63 to Ser77 are compositionally biased toward basic residues.

The protein belongs to the universal ribosomal protein uL4 family. In terms of assembly, part of the 50S ribosomal subunit.

One of the primary rRNA binding proteins, this protein initially binds near the 5'-end of the 23S rRNA. It is important during the early stages of 50S assembly. It makes multiple contacts with different domains of the 23S rRNA in the assembled 50S subunit and ribosome. Functionally, forms part of the polypeptide exit tunnel. This is Large ribosomal subunit protein uL4 from Phytoplasma australiense.